Here is a 118-residue protein sequence, read N- to C-terminus: MRHKHGYRKLGRTSSHRSALLKNLAIAIIKSEKIETTLPKAKELRSYVEKLITRARKGDSNAHRAVFASLQDKETTNKLVTEVAPKFKERNGGYTRIIKTRVRRGDAAEMAYIELVAE.

It belongs to the bacterial ribosomal protein bL17 family. As to quaternary structure, part of the 50S ribosomal subunit. Contacts protein L32.

In Campylobacter concisus (strain 13826), this protein is Large ribosomal subunit protein bL17.